Here is a 156-residue protein sequence, read N- to C-terminus: Probable cyclic pyranopterin monophosphate synthase (156 aa).

Residues 74-76 (MCH) and 110-111 (ME) contribute to the substrate site. Residue D125 is part of the active site.

The protein belongs to the MoaC family. Homohexamer; trimer of dimers.

It carries out the reaction (8S)-3',8-cyclo-7,8-dihydroguanosine 5'-triphosphate = cyclic pyranopterin phosphate + diphosphate. It participates in cofactor biosynthesis; molybdopterin biosynthesis. Functionally, catalyzes the conversion of (8S)-3',8-cyclo-7,8-dihydroguanosine 5'-triphosphate to cyclic pyranopterin monophosphate (cPMP). This chain is Probable cyclic pyranopterin monophosphate synthase, found in Methanospirillum hungatei JF-1 (strain ATCC 27890 / DSM 864 / NBRC 100397 / JF-1).